Here is a 363-residue protein sequence, read N- to C-terminus: Large ribosomal subunit protein uL4A (363 aa).

At Ser-87 the chain carries Phosphoserine. The C-terminal-extended nuclear localization signal stretch occupies residues 280 to 363; that stretch reads PENIISNADV…EKFLTVLHEN (84 aa).

It belongs to the universal ribosomal protein uL4 family. As to quaternary structure, component of the large ribosomal subunit (LSU). Mature yeast ribosomes consist of a small (40S) and a large (60S) subunit. The 40S small subunit contains 1 molecule of ribosomal RNA (18S rRNA) and at least 33 different proteins. The large 60S subunit contains 3 rRNA molecules (25S, 5.8S and 5S rRNA) and at least 46 different proteins. uL4 is associated with the polypeptide exit tunnel. uL4 interacts with its chaperone ACL4 and the nuclear import receptor KAP104.

Its subcellular location is the cytoplasm. It localises to the nucleus. Its function is as follows. Component of the ribosome, a large ribonucleoprotein complex responsible for the synthesis of proteins in the cell. The small ribosomal subunit (SSU) binds messenger RNAs (mRNAs) and translates the encoded message by selecting cognate aminoacyl-transfer RNA (tRNA) molecules. The large subunit (LSU) contains the ribosomal catalytic site termed the peptidyl transferase center (PTC), which catalyzes the formation of peptide bonds, thereby polymerizing the amino acids delivered by tRNAs into a polypeptide chain. The nascent polypeptides leave the ribosome through a tunnel in the LSU and interact with protein factors that function in enzymatic processing, targeting, and the membrane insertion of nascent chains at the exit of the ribosomal tunnel. uL4 participates in the regulation of the accumulation of its own mRNA. The chain is Large ribosomal subunit protein uL4A (rpl402) from Schizosaccharomyces pombe (strain 972 / ATCC 24843) (Fission yeast).